We begin with the raw amino-acid sequence, 231 residues long: Large ribosomal subunit protein uL1 (231 aa).

This sequence belongs to the universal ribosomal protein uL1 family. In terms of assembly, part of the 50S ribosomal subunit.

Its function is as follows. Binds directly to 23S rRNA. The L1 stalk is quite mobile in the ribosome, and is involved in E site tRNA release. Protein L1 is also a translational repressor protein, it controls the translation of the L11 operon by binding to its mRNA. The polypeptide is Large ribosomal subunit protein uL1 (Francisella tularensis subsp. tularensis (strain FSC 198)).